The chain runs to 443 residues: Light-independent protochlorophyllide reductase subunit N (443 aa).

[4Fe-4S] cluster-binding residues include cysteine 15, cysteine 40, and cysteine 99.

It belongs to the BchN/ChlN family. As to quaternary structure, protochlorophyllide reductase is composed of three subunits; BchL, BchN and BchB. Forms a heterotetramer of two BchB and two BchN subunits. It depends on [4Fe-4S] cluster as a cofactor.

The enzyme catalyses chlorophyllide a + oxidized 2[4Fe-4S]-[ferredoxin] + 2 ADP + 2 phosphate = protochlorophyllide a + reduced 2[4Fe-4S]-[ferredoxin] + 2 ATP + 2 H2O. It participates in porphyrin-containing compound metabolism; bacteriochlorophyll biosynthesis (light-independent). Its function is as follows. Component of the dark-operative protochlorophyllide reductase (DPOR) that uses Mg-ATP and reduced ferredoxin to reduce ring D of protochlorophyllide (Pchlide) to form chlorophyllide a (Chlide). This reaction is light-independent. The NB-protein (BchN-BchB) is the catalytic component of the complex. The polypeptide is Light-independent protochlorophyllide reductase subunit N (Heliobacterium modesticaldum (strain ATCC 51547 / Ice1)).